Here is a 102-residue protein sequence, read N- to C-terminus: ATP synthase subunit c (102 aa).

The next 2 helical transmembrane spans lie at 34-54 (IGAGVTMIAGSTVGIGQGYIF) and 80-100 (AVSESTAIYGLLISFILIFVA).

Belongs to the ATPase C chain family. F-type ATPases have 2 components, F(1) - the catalytic core - and F(0) - the membrane proton channel. F(1) has five subunits: alpha(3), beta(3), gamma(1), delta(1), epsilon(1). F(0) has three main subunits: a(1), b(2) and c(10-14). The alpha and beta chains form an alternating ring which encloses part of the gamma chain. F(1) is attached to F(0) by a central stalk formed by the gamma and epsilon chains, while a peripheral stalk is formed by the delta and b chains.

The protein resides in the cell membrane. In terms of biological role, f(1)F(0) ATP synthase produces ATP from ADP in the presence of a proton or sodium gradient. F-type ATPases consist of two structural domains, F(1) containing the extramembraneous catalytic core and F(0) containing the membrane proton channel, linked together by a central stalk and a peripheral stalk. During catalysis, ATP synthesis in the catalytic domain of F(1) is coupled via a rotary mechanism of the central stalk subunits to proton translocation. Functionally, key component of the F(0) channel; it plays a direct role in translocation across the membrane. A homomeric c-ring of between 10-14 subunits forms the central stalk rotor element with the F(1) delta and epsilon subunits. The polypeptide is ATP synthase subunit c (Mycoplasma genitalium (strain ATCC 33530 / DSM 19775 / NCTC 10195 / G37) (Mycoplasmoides genitalium)).